The primary structure comprises 452 residues: GTPase Der (452 aa).

EngA-type G domains lie at 4 to 169 and 177 to 352; these read PIVA…PAPQ and IKVA…QEHR. Residues 10–17, 57–61, 120–123, 183–190, 230–234, and 295–298 contribute to the GTP site; these read GRPNVGKS, DTGGL, NKCE, DTAGI, and NKWD. Residues 353–439 enclose the KH-like domain; that stretch reads RRVTTAVINE…IRLFWRGKKV (87 aa).

This sequence belongs to the TRAFAC class TrmE-Era-EngA-EngB-Septin-like GTPase superfamily. EngA (Der) GTPase family. Associates with the 50S ribosomal subunit.

Its function is as follows. GTPase that plays an essential role in the late steps of ribosome biogenesis. The chain is GTPase Der from Synechocystis sp. (strain ATCC 27184 / PCC 6803 / Kazusa).